A 60-amino-acid polypeptide reads, in one-letter code: Metallothionein-like protein EMB30 (60 aa).

It belongs to the metallothionein superfamily. Type 15 family.

In terms of biological role, metallothioneins have a high content of cysteine residues that bind various heavy metals. This Picea glauca (White spruce) protein is Metallothionein-like protein EMB30 (EMB30).